The following is a 348-amino-acid chain: Rhodopsin (348 aa).

Methionine 1 is modified (N-acetylmethionine). At 1-36 the chain is on the extracellular side; it reads MNGTEGPNFYVPFSNKTGVVRSPFEFPQYYLAEPWQ. 2 N-linked (GlcNAc...) asparagine glycosylation sites follow: asparagine 2 and asparagine 15. Residues 37–61 form a helical membrane-spanning segment; sequence FSMLAAYMFLLIVLGFPINFLTLYV. The Cytoplasmic segment spans residues 62–73; that stretch reads TVQHKKLRTPLN. A helical transmembrane segment spans residues 74 to 96; sequence YILLNLAVADLFMVFGGFTTTLY. The Extracellular portion of the chain corresponds to 97–110; it reads TSLHGYFVFGPTGC. An intrachain disulfide couples cysteine 110 to cysteine 187. Residues 111-133 form a helical membrane-spanning segment; that stretch reads NLEGFFATLGGEIALWSLVVLAI. Residues 134–136 carry the 'Ionic lock' involved in activated form stabilization motif; it reads ERY. Residues 134–152 are Cytoplasmic-facing; it reads ERYVVVCKPMSNFRFGENH. A helical transmembrane segment spans residues 153 to 173; the sequence is AIMGVGFTWVMALACAAPPLV. Residues 174-202 lie on the Extracellular side of the membrane; it reads GWSRYIPEGMQCSCGIDYYTLKPEVNNES. Zn(2+) is bound at residue glutamate 201. A helical membrane pass occupies residues 203-224; the sequence is FVIYMFVVHFTIPMIVIFFCYG. At 225-252 the chain is on the cytoplasmic side; the sequence is QLVFTVKEAAAQQQESATTQKAEKEVTR. Residues 253-274 traverse the membrane as a helical segment; it reads MVIIMVIAFLICWVPYASVAFY. Topologically, residues 275–286 are extracellular; sequence IFTHQGSNFGPI. Glutamine 279 contacts Zn(2+). Residues 287–308 traverse the membrane as a helical segment; sequence FMTLPAFFAKAASIYNPVIYIM. Lysine 296 is modified (N6-(retinylidene)lysine). Residues 309–348 lie on the Cytoplasmic side of the membrane; that stretch reads MNKQFRTCMITTLCCGKNPLGDDEVSASASKTETSQVAPA. Residues cysteine 322 and cysteine 323 are each lipidated (S-palmitoyl cysteine). The tract at residues 330-348 is interaction with SAG; the sequence is DDEVSASASKTETSQVAPA. Serine 334 and serine 338 each carry phosphoserine. Phosphothreonine is present on residues threonine 340 and threonine 342. Serine 343 bears the Phosphoserine mark.

It belongs to the G-protein coupled receptor 1 family. Opsin subfamily. In terms of assembly, homodimer. May form a complex composed of RHO, GRK1 and RCVRN in a Ca(2+)-dependent manner; RCVRN prevents the interaction between GRK1 and RHO. Interacts with GRK1. Interacts (phosphorylated form) with SAG. Interacts with GNAT1. Interacts with GNAT3. SAG and G-proteins compete for a common binding site. Interacts with PRCD; the interaction promotes PRCD stability. Forms a complex with ASAP1 and ARF4. Forms a complex with ASAP1, RAB11A, Rabin8/RAB3IP, ARF4 and RAB11FIP3; the complex regulates Golgi-to-cilia rhodopsin/RHO transport in photoreceptors. In terms of processing, phosphorylated on some or all of the serine and threonine residues present in the C-terminal region. Post-translationally, contains one covalently linked retinal chromophore. Upon light absorption, the covalently bound 11-cis-retinal is converted to all-trans-retinal. After hydrolysis of the Schiff base and release of the covalently bound all-trans-retinal, active rhodopsin is regenerated by binding of a fresh molecule of 11-cis-retinal.

It is found in the membrane. It localises to the cell projection. The protein localises to the cilium. Its subcellular location is the photoreceptor outer segment. Functionally, photoreceptor required for image-forming vision at low light intensity. Required for photoreceptor cell viability after birth. Light-induced isomerization of 11-cis to all-trans retinal triggers a conformational change that activates signaling via G-proteins. Subsequent receptor phosphorylation mediates displacement of the bound G-protein alpha subunit by the arrestin SAG and terminates signaling. The chain is Rhodopsin (RHO) from Phoca vitulina (Harbor seal).